The chain runs to 165 residues: Acireductone dioxygenase (165 aa).

Fe(2+)-binding residues include His-90, His-92, Glu-96, and His-134. His-90, His-92, Glu-96, and His-134 together coordinate Ni(2+).

This sequence belongs to the acireductone dioxygenase (ARD) family. In terms of assembly, monomer. Fe(2+) serves as cofactor. It depends on Ni(2+) as a cofactor.

It carries out the reaction 1,2-dihydroxy-5-(methylsulfanyl)pent-1-en-3-one + O2 = 3-(methylsulfanyl)propanoate + CO + formate + 2 H(+). The catalysed reaction is 1,2-dihydroxy-5-(methylsulfanyl)pent-1-en-3-one + O2 = 4-methylsulfanyl-2-oxobutanoate + formate + 2 H(+). The protein operates within amino-acid biosynthesis; L-methionine biosynthesis via salvage pathway; L-methionine from S-methyl-5-thio-alpha-D-ribose 1-phosphate: step 5/6. Its function is as follows. Catalyzes 2 different reactions between oxygen and the acireductone 1,2-dihydroxy-3-keto-5-methylthiopentene (DHK-MTPene) depending upon the metal bound in the active site. Fe-containing acireductone dioxygenase (Fe-ARD) produces formate and 2-keto-4-methylthiobutyrate (KMTB), the alpha-ketoacid precursor of methionine in the methionine recycle pathway. Ni-containing acireductone dioxygenase (Ni-ARD) produces methylthiopropionate, carbon monoxide and formate, and does not lie on the methionine recycle pathway. In Rhodopseudomonas palustris (strain TIE-1), this protein is Acireductone dioxygenase.